A 286-amino-acid chain; its full sequence is 4-diphosphocytidyl-2-C-methyl-D-erythritol kinase (286 aa).

The active site involves lysine 12. Residue 96 to 106 (PHGAGLGGGSA) participates in ATP binding. Aspartate 138 is a catalytic residue.

This sequence belongs to the GHMP kinase family. IspE subfamily.

It carries out the reaction 4-CDP-2-C-methyl-D-erythritol + ATP = 4-CDP-2-C-methyl-D-erythritol 2-phosphate + ADP + H(+). It functions in the pathway isoprenoid biosynthesis; isopentenyl diphosphate biosynthesis via DXP pathway; isopentenyl diphosphate from 1-deoxy-D-xylulose 5-phosphate: step 3/6. In terms of biological role, catalyzes the phosphorylation of the position 2 hydroxy group of 4-diphosphocytidyl-2C-methyl-D-erythritol. This Nitratidesulfovibrio vulgaris (strain DP4) (Desulfovibrio vulgaris) protein is 4-diphosphocytidyl-2-C-methyl-D-erythritol kinase.